A 180-amino-acid polypeptide reads, in one-letter code: Protein YOP1 (180 aa).

Serine 2 carries the N-acetylserine modification. An interaction with YIP1 region spans residues 2–17; that stretch reads SEYASSIHSQMKQFDT. Over 2–35 the chain is Cytoplasmic; sequence SEYASSIHSQMKQFDTKYSGNRILQQLENKTNLP. Residues 36-55 form a helical membrane-spanning segment; it reads KSYLVAGLGFAYLLLIFINV. Residues 56-57 lie on the Lumenal side of the membrane; that stretch reads GG. The chain crosses the membrane as a helical span at residues 58–78; that stretch reads VGEILSNFAGFVLPAYLSLVA. The Cytoplasmic portion of the chain corresponds to 79-88; it reads LKTPTSTDDT. Residues 89–105 form a helical membrane-spanning segment; that stretch reads QLLTYWIVFSFLSVIEF. Residues 106 to 108 are Lumenal-facing; that stretch reads WSK. The chain crosses the membrane as a helical span at residues 109 to 127; sequence AILYLIPFYWFLKTVFLIY. Topologically, residues 128–180 are cytoplasmic; it reads IALPQTGGARMIYQKIVAPLTDRYILRDVSKTEKDEIRASVNEASKATGASVH.

Belongs to the DP1 family. Oligomer. Interacts with YIP1.

Its subcellular location is the endoplasmic reticulum membrane. It localises to the golgi apparatus membrane. In terms of biological role, required to generate and maintain the structure of the tubular endoplasmic reticulum network and the vacuole. Induces high curvature in membranes and causes membrane tubule formation. Involved in membrane/vesicle trafficking. This chain is Protein YOP1 (YOP1), found in Saccharomyces cerevisiae (strain ATCC 204508 / S288c) (Baker's yeast).